Consider the following 227-residue polypeptide: Ureidoacrylate amidohydrolase RutB (227 aa).

Aspartate 22 functions as the Proton acceptor in the catalytic mechanism. The active site involves lysine 131. Catalysis depends on cysteine 164, which acts as the Nucleophile.

Belongs to the isochorismatase family. RutB subfamily.

It catalyses the reaction (Z)-3-ureidoacrylate + H2O + H(+) = (Z)-3-aminoacrylate + NH4(+) + CO2. It carries out the reaction (Z)-3-ureidoacrylate + H2O = (Z)-3-aminoacrylate + carbamate + H(+). The catalysed reaction is (Z)-2-methylureidoacrylate + H2O + H(+) = (Z)-2-methylaminoacrylate + NH4(+) + CO2. In terms of biological role, hydrolyzes ureidoacrylate to form aminoacrylate and carbamate. The carbamate hydrolyzes spontaneously, thereby releasing one of the nitrogen atoms of the pyrimidine ring as ammonia and one of its carbon atoms as CO2. This is Ureidoacrylate amidohydrolase RutB from Azorhizobium caulinodans (strain ATCC 43989 / DSM 5975 / JCM 20966 / LMG 6465 / NBRC 14845 / NCIMB 13405 / ORS 571).